The sequence spans 150 residues: Meiotically up-regulated gene 108 protein (150 aa).

Residues 1 to 11 (MANRFTSSDQT) are compositionally biased toward polar residues. Residues 1–150 (MANRFTSSDQ…RDISLLGSTI (150 aa)) form a disordered region. Positions 12–23 (QETHGHHVDKHS) are enriched in basic and acidic residues. Polar residues predominate over residues 83–93 (NRSSQHTGRVN).

Its subcellular location is the cytoplasm. The protein resides in the nucleus. In terms of biological role, has a role in meiosis. The chain is Meiotically up-regulated gene 108 protein (mug108) from Schizosaccharomyces pombe (strain 972 / ATCC 24843) (Fission yeast).